The sequence spans 204 residues: uncharacterized protein (204 aa).

Residues 109–136 are a coiled coil; it reads QFDIDVHKDQIEKLKDLYKALLRIAETT.

This is an uncharacterized protein from Bacillus subtilis (strain 168).